The sequence spans 107 residues: Pyrimidine/purine nucleoside phosphorylase (107 aa).

This sequence belongs to the nucleoside phosphorylase PpnP family.

The enzyme catalyses a purine D-ribonucleoside + phosphate = a purine nucleobase + alpha-D-ribose 1-phosphate. It catalyses the reaction adenosine + phosphate = alpha-D-ribose 1-phosphate + adenine. The catalysed reaction is cytidine + phosphate = cytosine + alpha-D-ribose 1-phosphate. It carries out the reaction guanosine + phosphate = alpha-D-ribose 1-phosphate + guanine. The enzyme catalyses inosine + phosphate = alpha-D-ribose 1-phosphate + hypoxanthine. It catalyses the reaction thymidine + phosphate = 2-deoxy-alpha-D-ribose 1-phosphate + thymine. The catalysed reaction is uridine + phosphate = alpha-D-ribose 1-phosphate + uracil. It carries out the reaction xanthosine + phosphate = alpha-D-ribose 1-phosphate + xanthine. Functionally, catalyzes the phosphorolysis of diverse nucleosides, yielding D-ribose 1-phosphate and the respective free bases. Can use uridine, adenosine, guanosine, cytidine, thymidine, inosine and xanthosine as substrates. Also catalyzes the reverse reactions. The protein is Pyrimidine/purine nucleoside phosphorylase of Azoarcus sp. (strain BH72).